A 238-amino-acid chain; its full sequence is Probable transcriptional regulatory protein CAB166 (238 aa).

It belongs to the TACO1 family.

It localises to the cytoplasm. The protein is Probable transcriptional regulatory protein CAB166 of Chlamydia abortus (strain DSM 27085 / S26/3) (Chlamydophila abortus).